The primary structure comprises 326 residues: tRNA-modifying protein YgfZ (326 aa).

Folate contacts are provided by Trp-27 and Trp-189.

Belongs to the tRNA-modifying YgfZ family.

The protein localises to the cytoplasm. Folate-binding protein involved in regulating the level of ATP-DnaA and in the modification of some tRNAs. It is probably a key factor in regulatory networks that act via tRNA modification, such as initiation of chromosomal replication. This is tRNA-modifying protein YgfZ from Escherichia coli O17:K52:H18 (strain UMN026 / ExPEC).